The sequence spans 285 residues: Putative ankyrin repeat protein R551 (285 aa).

ANK repeat units follow at residues 99–129 (DLKS…PIKI), 157–186 (NDFD…LQDE), 188–214 (IGKI…EAFR), and 215–249 (SAPD…CIQQ).

This Acanthamoeba polyphaga (Amoeba) protein is Putative ankyrin repeat protein R551.